We begin with the raw amino-acid sequence, 598 residues long: Elongation factor 4 (598 aa).

Residues 3-185 (QHIRNFSIIA…MIVAQIPPPE (183 aa)) enclose the tr-type G domain. GTP contacts are provided by residues 15–20 (DHGKST) and 132–135 (NKID).

It belongs to the TRAFAC class translation factor GTPase superfamily. Classic translation factor GTPase family. LepA subfamily.

It is found in the cell inner membrane. It catalyses the reaction GTP + H2O = GDP + phosphate + H(+). Functionally, required for accurate and efficient protein synthesis under certain stress conditions. May act as a fidelity factor of the translation reaction, by catalyzing a one-codon backward translocation of tRNAs on improperly translocated ribosomes. Back-translocation proceeds from a post-translocation (POST) complex to a pre-translocation (PRE) complex, thus giving elongation factor G a second chance to translocate the tRNAs correctly. Binds to ribosomes in a GTP-dependent manner. This chain is Elongation factor 4, found in Nitrosomonas europaea (strain ATCC 19718 / CIP 103999 / KCTC 2705 / NBRC 14298).